The sequence spans 305 residues: tRNA pseudouridine synthase B (305 aa).

Asp48 acts as the Nucleophile in catalysis.

It belongs to the pseudouridine synthase TruB family. Type 1 subfamily.

The catalysed reaction is uridine(55) in tRNA = pseudouridine(55) in tRNA. Responsible for synthesis of pseudouridine from uracil-55 in the psi GC loop of transfer RNAs. The protein is tRNA pseudouridine synthase B of Pseudomonas fluorescens (strain Pf0-1).